The sequence spans 72 residues: Long neurotoxin 1 (72 aa).

5 disulfides stabilise this stretch: C3/C21, C14/C42, C27/C31, C46/C57, and C58/C63.

Belongs to the three-finger toxin family. Long-chain subfamily. Type II alpha-neurotoxin sub-subfamily. Expressed by the venom gland.

The protein localises to the secreted. Its function is as follows. Binds with high affinity to muscular (alpha-1/CHRNA1) and neuronal (alpha-7/CHRNA7) nicotinic acetylcholine receptor (nAChR) and inhibits acetylcholine from binding to the receptor, thereby impairing neuromuscular and neuronal transmission. This Naja anchietae (Anchieta's cobra) protein is Long neurotoxin 1.